The chain runs to 336 residues: MSVVGSFEQLERLRDLFYKLLDLRDTLRERGVAWPKPLSEEAALGTVRVKVGFPAMLKRGVIMDVTNVEQAQIAEDAGAVGVMVLDKLPYDVRRAGGVARMADLKVIEEVMAHVTIPVSAKVRIGHYYEAFLLEQVGVDLIDESEVLTPVDEQHHINKWMFTVPFVNGARELCEALRRISEGASMIRSKGEAGTGNVAEAVKHFKSIYGAIKSLAAGDEERVRDFARQCQVPFELVALTAKLQRLPVITFAAGGIATPADAALMMWLGADGVFVGSGIFKSQDPRERAEAIVLATAHWDDPETVVEAQKMVSERGAMMGIDIRTLKPEELLQTRGV.

Asp64 is a D-ribose 5-phosphate binding site. Lys121 acts as the Schiff-base intermediate with D-ribose 5-phosphate in catalysis. Residue Gly193 coordinates D-ribose 5-phosphate. Lys205 provides a ligand contact to D-glyceraldehyde 3-phosphate. Residues Gly254 and 275–276 (GS) each bind D-ribose 5-phosphate.

Belongs to the PdxS/SNZ family. In the presence of PdxT, forms a dodecamer of heterodimers.

It catalyses the reaction aldehydo-D-ribose 5-phosphate + D-glyceraldehyde 3-phosphate + L-glutamine = pyridoxal 5'-phosphate + L-glutamate + phosphate + 3 H2O + H(+). The protein operates within cofactor biosynthesis; pyridoxal 5'-phosphate biosynthesis. Catalyzes the formation of pyridoxal 5'-phosphate from ribose 5-phosphate (RBP), glyceraldehyde 3-phosphate (G3P) and ammonia. The ammonia is provided by the PdxT subunit. Can also use ribulose 5-phosphate and dihydroxyacetone phosphate as substrates, resulting from enzyme-catalyzed isomerization of RBP and G3P, respectively. The chain is Pyridoxal 5'-phosphate synthase subunit PdxS from Pyrobaculum aerophilum (strain ATCC 51768 / DSM 7523 / JCM 9630 / CIP 104966 / NBRC 100827 / IM2).